Here is a 129-residue protein sequence, read N- to C-terminus: Follitropin subunit beta (129 aa).

Positions 1–20 (MKTLQFFFLFCCWKAICCNS) are cleaved as a signal peptide. 6 cysteine pairs are disulfide-bonded: C21–C69, C35–C84, C38–C122, C46–C100, C50–C102, and C105–C112. N-linked (GlcNAc...) asparagine glycosylation is found at N25 and N42.

It belongs to the glycoprotein hormones subunit beta family. In terms of assembly, heterodimer. The active follitropin is a heterodimer composed of an alpha chain/CGA shared with other hormones and a unique beta chain/FSHB shown here.

It is found in the secreted. In terms of biological role, together with the alpha chain CGA constitutes follitropin, the follicle-stimulating hormone, and provides its biological specificity to the hormone heterodimer. Binds FSHR, a G protein-coupled receptor, on target cells to activate downstream signaling pathways. Follitropin is involved in follicle development and spermatogenesis in reproductive organs. The chain is Follitropin subunit beta (FSHB) from Pan troglodytes (Chimpanzee).